The chain runs to 780 residues: TSC22 domain family protein 2 (780 aa).

5 disordered regions span residues 20–86, 126–158, 235–499, 587–607, and 736–780; these read AQVA…TVSP, TSAPAPGAPGGPQLAGSSAGPVTAAPSQPPTTC, AHGP…PGGP, LVGQVDDTRRKSEPLPQPPLS, and LSSN…VSSA. Positions 28–37 are enriched in acidic residues; the sequence is EDTESLDDPD. Positions 126–146 are enriched in low complexity; the sequence is TSAPAPGAPGGPQLAGSSAGP. Positions 241–262 are enriched in polar residues; it reads GTDSSLTAVSQLPPSEKMSQPT. 3 stretches are compositionally biased toward low complexity: residues 297–316, 344–361, and 395–412; these read GAATGPQPMMAAAQPSQPQG, PAVGAPAAQQPQQFAYPQ, and QPSSTGAAASPATAATLP. Over residues 415–434 the composition is skewed to polar residues; it reads TGQNASSVGAQLMGASSQPS. Low complexity predominate over residues 453-468; sequence QPTGVPPATVGGVVQP. Polar residues predominate over residues 736-756; it reads LSSNDQLSQLPTQQANPGSTS. A compositionally biased stretch (pro residues) spans 765–774; sequence PPQPTQPPQQ.

Belongs to the TSC-22/Dip/Bun family. In terms of assembly, interacts with NRBP1. Interacts with PKM isoform M2; the interaction results in reduced nuclear levels of PKM isoform M2, leading to repression of cyclin CCND1 transcription and reduced cell growth. Interacts with WDR77.

Its function is as follows. Reduces the level of nuclear PKM isoform M2 which results in repression of cyclin CCND1 transcription and reduced cell growth. The sequence is that of TSC22 domain family protein 2 from Homo sapiens (Human).